The sequence spans 340 residues: Probable serine acetyltransferase 5 (340 aa).

2 stretches are compositionally biased toward low complexity: residues 1 to 17 (MLVV…RVAA) and 54 to 64 (PAEVVPAFAPP). The segment at 1–67 (MLVVVARKSS…VPAFAPPESE (67 aa)) is disordered.

This sequence belongs to the transferase hexapeptide repeat family. Homomultimer.

The enzyme catalyses L-serine + acetyl-CoA = O-acetyl-L-serine + CoA. It participates in amino-acid biosynthesis; L-cysteine biosynthesis; L-cysteine from L-serine: step 1/2. This Oryza sativa subsp. japonica (Rice) protein is Probable serine acetyltransferase 5 (SAT5).